Here is a 512-residue protein sequence, read N- to C-terminus: tRNA modification GTPase gtpbp3, mitochondrial (512 aa).

The region spanning 246–434 (GANIAIVGPP…LLNLLKLNLK (189 aa)) is the TrmE-type G domain. GTP is bound by residues 253-260 (GPPNAGKS), 300-304 (DTAGL), and 375-378 (NKSD).

This sequence belongs to the TRAFAC class TrmE-Era-EngA-EngB-Septin-like GTPase superfamily. TrmE GTPase family.

Its subcellular location is the mitochondrion. In terms of biological role, GTPase involved in the 5-carboxymethylaminomethyl modification (mnm(5)s(2)U34) of the wobble uridine base in mitochondrial tRNAs. This chain is tRNA modification GTPase gtpbp3, mitochondrial (gtpbp3), found in Dictyostelium discoideum (Social amoeba).